Reading from the N-terminus, the 265-residue chain is MTGAQLIMACLKAHHVTTLFGYPGGAIMPTYDALYDAGLDHLLCRNEQGTAMAAIGYARSTGKVGVCIATSGPGATNLVIGLGDAMMDSIPVVTITGQVASPLIGTDAFQEADVLGLSLACTKHSFIVQSADVALQGDLIQALNALKQDLDIEPWREQIRNFKAKLDFTYVENQGNRPIDPWALLNSLSNRKPNNAIICTDVGQHQMWLVQHILRVARHCGFTVTTMEMTLIETQVRLKITVKSDRTLDLLVNQLVKLPDVLMVN.

Glutamate 47 is a thiamine diphosphate binding site. The segment at 204–247 (QHQMWLVQHILRVARHCGFTVTTMEMTLIETQVRLKITVKSDRT) is thiamine pyrophosphate binding.

It belongs to the TPP enzyme family. The cofactor is Mg(2+). It depends on thiamine diphosphate as a cofactor.

Truncated acetolactase synthase; no longer catalytically active. This is an uncharacterized protein from Haemophilus influenzae (strain ATCC 51907 / DSM 11121 / KW20 / Rd).